Reading from the N-terminus, the 380-residue chain is Chaperone protein DnaJ (380 aa).

A disordered region spans residues 1 to 48 (MAKKDYYDTLGVPKNASDDDIKKAYRKLAMKHHPDRNQGDKSKVSEEK). In terms of domain architecture, J spans 5 to 72 (DYYDTLGVPK…NKRMAYDQYG (68 aa)). Residues 24–34 (AYRKLAMKHHP) are compositionally biased toward basic residues. The span at 35 to 48 (DRNQGDKSKVSEEK) shows a compositional bias: basic and acidic residues. The segment at 139–217 (GKEAQIRIPS…CHGVGKTKNN (79 aa)) adopts a CR-type zinc-finger fold. Positions 152, 155, 169, 172, 191, 194, 205, and 208 each coordinate Zn(2+). CXXCXGXG motif repeat units follow at residues 152–159 (CNTCHGSG), 169–176 (CTTCHGHG), 191–198 (CPQCKGTG), and 205–212 (CVACHGVG). A disordered region spans residues 357-380 (KKGGARHSPSEEGWADKLKSFFSA). Over residues 364–380 (SPSEEGWADKLKSFFSA) the composition is skewed to basic and acidic residues.

The protein belongs to the DnaJ family. Homodimer. Zn(2+) serves as cofactor.

The protein resides in the cytoplasm. Participates actively in the response to hyperosmotic and heat shock by preventing the aggregation of stress-denatured proteins and by disaggregating proteins, also in an autonomous, DnaK-independent fashion. Unfolded proteins bind initially to DnaJ; upon interaction with the DnaJ-bound protein, DnaK hydrolyzes its bound ATP, resulting in the formation of a stable complex. GrpE releases ADP from DnaK; ATP binding to DnaK triggers the release of the substrate protein, thus completing the reaction cycle. Several rounds of ATP-dependent interactions between DnaJ, DnaK and GrpE are required for fully efficient folding. Also involved, together with DnaK and GrpE, in the DNA replication of plasmids through activation of initiation proteins. The polypeptide is Chaperone protein DnaJ (Polaromonas sp. (strain JS666 / ATCC BAA-500)).